Reading from the N-terminus, the 100-residue chain is Large ribosomal subunit protein uL23 (100 aa).

The protein belongs to the universal ribosomal protein uL23 family. In terms of assembly, part of the 50S ribosomal subunit. Contacts protein L29, and trigger factor when it is bound to the ribosome.

In terms of biological role, one of the early assembly proteins it binds 23S rRNA. One of the proteins that surrounds the polypeptide exit tunnel on the outside of the ribosome. Forms the main docking site for trigger factor binding to the ribosome. The protein is Large ribosomal subunit protein uL23 of Pseudothermotoga lettingae (strain ATCC BAA-301 / DSM 14385 / NBRC 107922 / TMO) (Thermotoga lettingae).